The sequence spans 226 residues: ATP-dependent dethiobiotin synthetase BioD (226 aa).

Position 12 to 17 (12 to 17 (GVGKTV)) interacts with ATP. T16 contributes to the Mg(2+) binding site. The active site involves K37. T41 contributes to the substrate binding site. ATP-binding positions include D49, 108–111 (EGAG), 169–170 (GS), and 197–199 (PAG). Mg(2+)-binding residues include D49 and E108.

The protein belongs to the dethiobiotin synthetase family. As to quaternary structure, homodimer. The cofactor is Mg(2+).

It is found in the cytoplasm. It catalyses the reaction (7R,8S)-7,8-diammoniononanoate + CO2 + ATP = (4R,5S)-dethiobiotin + ADP + phosphate + 3 H(+). The protein operates within cofactor biosynthesis; biotin biosynthesis; biotin from 7,8-diaminononanoate: step 1/2. Functionally, catalyzes a mechanistically unusual reaction, the ATP-dependent insertion of CO2 between the N7 and N8 nitrogen atoms of 7,8-diaminopelargonic acid (DAPA, also called 7,8-diammoniononanoate) to form a ureido ring. This is ATP-dependent dethiobiotin synthetase BioD from Mycobacterium bovis (strain ATCC BAA-935 / AF2122/97).